The primary structure comprises 219 residues: MOB kinase activator-like 1 (219 aa).

Positions 79, 84, 161, and 166 each coordinate Zn(2+).

The protein belongs to the MOB1/phocein family. As to quaternary structure, interacts with and activates trc and wts. Post-translationally, phosphorylated by wts/mats kinase complex. Activated by phosphorylation by Hippo (Hpo) kinase which increases its affinity and its ability to activate Warts (Wts) kinase. As to expression, ubiquitously expressed at low levels in developing tissues (at protein level).

It localises to the cytoplasm. The protein resides in the cytoskeleton. It is found in the microtubule organizing center. Its subcellular location is the centrosome. The protein localises to the nucleus. It localises to the cytosol. The protein resides in the cell membrane. Functionally, coactivator of Warts (Wts) kinase in the Hippo/SWH (Sav/Wts/Hpo)signaling pathway, a signaling pathway that plays a pivotal role in organ size control and tumor suppression by restricting proliferation and promoting apoptosis. The core of this pathway is composed of a kinase cascade wherein Hippo (Hpo), in complex with its regulatory protein Salvador (Sav), phosphorylates and activates Warts (Wts) in complex with its regulatory protein Mats, which in turn phosphorylates and inactivates the Yorkie (Yki)oncoprotein. The Hippo/SWH signaling pathway inhibits the activity of the transcriptional complex formed by Scalloped (sd) and Yki and the target genes of this pathway include cyclin-E (cycE), diap1 and bantam. Mats is essential for early development and is required for proper chromosomal segregation in developing embryos. This is MOB kinase activator-like 1 from Drosophila melanogaster (Fruit fly).